A 201-amino-acid chain; its full sequence is Syndecan-2 (201 aa).

A signal peptide spans 1–18; sequence MQRAWILLTLGLMACVSA. Residues 19-144 are Extracellular-facing; sequence ETRAELTSDK…HSDNLFKRTE (126 aa). 3 O-linked (Xyl...) (glycosaminoglycan) serine glycosylation sites follow: Ser-41, Ser-55, and Ser-57. 2 disordered regions span residues 42-69 and 88-129; these read GLYPIDDDDYSSASGSGAYEDKGSPDLT and TMTL…KSTD. The span at 90 to 102 shows a compositional bias: polar residues; that stretch reads TLKTQSITPTQTE. Residues 106–123 are compositionally biased toward basic and acidic residues; sequence ETDKKEFEISEAEEKQDP. Residue Ser-115 is modified to Phosphoserine. A helical membrane pass occupies residues 145–169; sequence VLAAVIAGGVIGFLFAIFLILLLVY. Residues 170-201 are Cytoplasmic-facing; the sequence is RMRKKDEGSYDLGERKPSSAAYQKAPTKEFYA. The disordered stretch occupies residues 178 to 201; it reads SYDLGERKPSSAAYQKAPTKEFYA. Residue Ser-187 is modified to Phosphoserine.

It belongs to the syndecan proteoglycan family. As to quaternary structure, interacts (via cytoplasmic domain) with SARM1. Forms a complex with SDCBP and PDCD6IP. Post-translationally, O-glycosylated; contains both heparan sulfate and chondroitin sulfate.

It localises to the membrane. Its function is as follows. Cell surface proteoglycan which regulates dendritic arbor morphogenesis. This is Syndecan-2 (Sdc2) from Rattus norvegicus (Rat).